The chain runs to 865 residues: MHYFRRNCIFFLIVILYGTNSSPSTQNVTSREVVSSVQLSEEESTFYLCPPPVGSTVIRLEPPRKCPEPRKATEWGEGIAILFKENISPYKFKVTLYYKNIIQTTTWTGTTYRQITNRYTDRTPVSIEEITDLIDGKGRCSSKARYLRNNVYVEAFDRDAGEKQVLLKPSKFNTPESRAWHTTNETYTVWGSPWIYRTGTSVNCIVEEMDARSVFPYSYFAMANGDIANISPFYGLSPPEAAAEPMGYPQDNFKQLDSYFSMDLDKRRKASLPVKRNFLITSHFTVGWDWAPKTTRVCSMTKWKEVTEMLRATVNGRYRFMARELSATFISNTTEFDPNRIILGQCIKREAEAAIEQIFRTKYNDSHVKVGHVQYFLALGGFIVAYQPVLSKSLAHMYLRELMRDNRTDEMLDLVNNKHAIYKKNATSLSRLRRDIRNAPNRKITLDDTTAIKSTSSVQFAMLQFLYDHIQTHINDMFSRIATAWCELQNRELVLWHEGIKINPSATASATLGRRVAAKMLGDVAAVSSCTAIDAESVTLQNSMRVITSTNTCYSRPLVLFSYGENQGNIQGQLGENNELLPTLEAVEPCSANHRRYFLFGSGYALFENYNFVKMVDAADIQIASTFVELNLTLLEDREILPLSVYTKEELRDVGVLDYAEVARRNQLHELKFYDINKVIEVDTNYAFMNGLAELFNGMGQVGQAIGKVVVGAAGAIVSTISGVSAFMSNPFGALAIGLIIIAGLVAAFLAYRYVNKLKSNPMKALYPMTTEVLKAQATRELHGEESDDLERTSIDERKLEEAREMIKYMALVSAEERHEKKLRRKRRGTTAVLSDHLAKMRIKNSNPKYDKLPTTYSDSEDDAV.

A signal peptide spans 1–21 (MHYFRRNCIFFLIVILYGTNS). The Virion surface segment spans residues 22–731 (SPSTQNVTSR…SGVSAFMSNP (710 aa)). N-linked (GlcNAc...) asparagine; by host glycosylation occurs at Asn27. 5 disulfides stabilise this stretch: Cys49-Cys530, Cys66-Cys486, Cys140-Cys204, Cys298-Cys346, and Cys553-Cys590. The involved in fusion and/or binding to host membrane stretch occupies residues 106 to 112 (TWTGTTY). The N-linked (GlcNAc...) asparagine; by host glycan is linked to Asn184. An involved in fusion and/or binding to host membrane region spans residues 191–198 (GSPWIYRT). N-linked (GlcNAc...) asparagine; by host glycosylation is found at Asn332, Asn364, Asn406, and Asn425. An N-linked (GlcNAc...) asparagine; by host glycan is attached at Asn631. Hydrophobic membrane proximal region regions lie at residues 676-729 (INKV…AFMS) and 683-729 (DTNY…AFMS). A helical membrane pass occupies residues 732 to 752 (FGALAIGLIIIAGLVAAFLAY). Residues 753 to 865 (RYVNKLKSNP…TYSDSEDDAV (113 aa)) are Intravirion-facing. Positions 809–812 (YMAL) match the Golgi targeting motif. The tract at residues 843 to 865 (IKNSNPKYDKLPTTYSDSEDDAV) is disordered. The Internalization motif motif lies at 850–853 (YDKL).

This sequence belongs to the herpesviridae glycoprotein B family. As to quaternary structure, homotrimer; disulfide-linked. Binds to heparan sulfate proteoglycans. Interacts with gH/gL heterodimer. In terms of processing, a proteolytic cleavage by host furin generates two subunits that remain linked by disulfide bonds.

It localises to the virion membrane. Its subcellular location is the host cell membrane. It is found in the host endosome membrane. The protein resides in the host Golgi apparatus membrane. Its function is as follows. Envelope glycoprotein that forms spikes at the surface of virion envelope. Essential for the initial attachment to heparan sulfate moieties of the host cell surface proteoglycans. Involved in fusion of viral and cellular membranes leading to virus entry into the host cell. Following initial binding to its host receptors, membrane fusion is mediated by the fusion machinery composed at least of gB and the heterodimer gH/gL. May be involved in the fusion between the virion envelope and the outer nuclear membrane during virion egress. In Gallid herpesvirus 2 (strain Chicken/Md5/ATCC VR-987) (GaHV-2), this protein is Envelope glycoprotein B.